The following is a 232-amino-acid chain: QIKDLLVSSSTDLDTTLVLVNAIYFKGMWKTAFNAEDTREMPFHVTKQESKPVQMMCMNNSFNVATLPAEKMKILELPFASGDLSMLVLLPDEVSDLERIEKTINFEKLTEWTNPNTMEKRRVKVYLPQMKIEEKYNLTSVLMALGMTDLFIPSANLTGISSAESLKISQAVHGAFMELSEDGIEMAGSTGVIEDIKHSPESEQFRADHPFLFLIKHNPTNTIVYFGRYWSP.

It belongs to the serpin family. Ov-serpin subfamily. In terms of tissue distribution, expressed in egg white (at protein level).

In Gallus gallus (Chicken), this protein is Ovalbumin-related protein X (SERPINB14C).